An 883-amino-acid polypeptide reads, in one-letter code: Pyruvate, phosphate dikinase 2 (883 aa).

A disordered region spans residues 1 to 21 (MAPAPCGRSSQRVFHFGKGKS). H465 functions as the Tele-phosphohistidine intermediate in the catalytic mechanism. Substrate is bound by residues R571, R628, E757, G778, T779, N780, and D781. E757 is a binding site for Mg(2+). Mg(2+) is bound at residue D781. C843 functions as the Proton donor in the catalytic mechanism.

It belongs to the PEP-utilizing enzyme family. The cofactor is Mg(2+). As to expression, expressed in leaves, roots and stems.

It localises to the cytoplasm. The enzyme catalyses pyruvate + phosphate + ATP = phosphoenolpyruvate + AMP + diphosphate + H(+). In terms of biological role, formation of phosphoenolpyruvate, which is the primary acceptor of CO(2) in C4 and some Crassulacean acid metabolism plants. This chain is Pyruvate, phosphate dikinase 2, found in Zea mays (Maize).